A 211-amino-acid chain; its full sequence is uncharacterized protein (211 aa).

Residues 155 to 211 (AAENASEEGDKKQIITDSGKLPETEELTETTNEDLDIKQFSPYSSESSANVSSYNKS) form a disordered region. A compositionally biased stretch (acidic residues) spans 178–188 (TEELTETTNED). The span at 195–211 (SPYSSESSANVSSYNKS) shows a compositional bias: low complexity.

This is an uncharacterized protein from Schizosaccharomyces pombe (strain 972 / ATCC 24843) (Fission yeast).